Consider the following 257-residue polypeptide: Probable oxidoreductase yanE (257 aa).

The protein belongs to the oxidoreductase OpS7 family.

Its pathway is secondary metabolite biosynthesis; terpenoid biosynthesis. Functionally, part of the gene cluster that mediates the biosynthesis of yanuthone D, a fungal isoprenoid epoxycyclohexenone that acts as an antibiotic against fungi and bacteria. The first step of the pathway is the synthesis of 6-methylsalicylic acid (6-MSA) by the polyketide synthase yanA. 6-MSA is then converted to m-cresol by the decarboxylase yanB. The cytochrome P450 monooxygenase yanC then catalyzes the oxidation of m-cresol to toluquinol. Epoxidation of toluquinol is then performed by the short chain dehydrogenase yanD, with the help of yanE, and a further prenylation by yanG leads to 7-deacetoxyyanuthone A. The next step is the hydroxylation of C-22 of 7-deacetoxyyanuthone A by the cytochrome P450 monooxygenase yanH to yield 22-deacetylyanuthone A. O-Mevalon transferase yanI then attaches mevalon to the hydroxyl group of 22-deacetylyanuthone A to produce yanuthone E. Finally, the FAD-dependent monooxygenase yanF oxidizes the hydroxyl group at C15 of yanuthone E to form yanuthone D. Furthermore, several branching points in the pathway lead to the production of yanuthones F and G from 7-deacetoxyyanuthone A; yanuthones H and I from 22-deacetylyanuthone A; and yanuthone J from yanuthone E. YanE is also involved in the synthesis of yanuthone X1 which does not have 6-methylsalicylic acid (6-MSA) as precursor. This is Probable oxidoreductase yanE from Aspergillus niger (strain ATCC 1015 / CBS 113.46 / FGSC A1144 / LSHB Ac4 / NCTC 3858a / NRRL 328 / USDA 3528.7).